A 237-amino-acid chain; its full sequence is Large ribosomal subunit protein uL1 (237 aa).

Belongs to the universal ribosomal protein uL1 family. Part of the 50S ribosomal subunit.

Its function is as follows. Binds directly to 23S rRNA. The L1 stalk is quite mobile in the ribosome, and is involved in E site tRNA release. Protein L1 is also a translational repressor protein, it controls the translation of the L11 operon by binding to its mRNA. This Synechococcus elongatus (strain ATCC 33912 / PCC 7942 / FACHB-805) (Anacystis nidulans R2) protein is Large ribosomal subunit protein uL1.